A 301-amino-acid polypeptide reads, in one-letter code: Ubiquitin thioesterase OTU1 (301 aa).

The tract at residues 4–80 is UBX-like; sequence KVTGAGINQV…TIESSDSNES (77 aa). The region spanning 109–229 is the OTU domain; it reads LSVHPVLDDN…GIHYDSLTMN (121 aa). Positions 114–120 are cys-loop; that stretch reads VLDDNSC. Asp-117 is a catalytic residue. Catalysis depends on Cys-120, which acts as the Nucleophile. A Glycyl lysine isopeptide (Lys-Gly) (interchain with G-Cter in ubiquitin) cross-link involves residue Lys-160. The segment at 169 to 179 is variable-loop; the sequence is ILKMESWGGAI. Residues 218–222 form a his-loop region; it reads FNGIH. Ile-221 contributes to the substrate binding site. His-222 is an active-site residue. The segment at 243-248 is S2 site; the sequence is DDVLTA. The segment at 270 to 294 adopts a C2H2-type zinc-finger fold; that stretch reads IKCNTCQMTFVGEREVARHAESTGH. The active site involves His-294.

Forms a complex composed of CDC48, NPL4, UFD1, DOA1, SHP1 and deubiquitinase OTU1; within the complex interacts with CDC48 and DOA1/UFD3.

The protein resides in the cytoplasm. It localises to the nucleus. The catalysed reaction is Thiol-dependent hydrolysis of ester, thioester, amide, peptide and isopeptide bonds formed by the C-terminal Gly of ubiquitin (a 76-residue protein attached to proteins as an intracellular targeting signal).. In terms of biological role, hydrolase that can remove conjugated ubiquitin from proteins and may therefore play an important regulatory role at the level of protein turnover by preventing degradation. Participates in the regulation of the ubiquitin conjugation pathway involving CDC48 by hindering multiubiquitination of substrates at the CDC48 chaperone. May be indirectly involved in PIS1 gene expression. The polypeptide is Ubiquitin thioesterase OTU1 (OTU1) (Saccharomyces cerevisiae (strain ATCC 204508 / S288c) (Baker's yeast)).